The primary structure comprises 365 residues: Alpha-keto acid-binding periplasmic protein TakP (365 aa).

Residues 1–26 (MDRRSFITKAAVGGAAASALAAPALA) constitute a signal peptide (tat-type signal). Substrate-binding positions include 99 to 100 (YY), Q156, and R177. Q156 provides a ligand contact to Na(+). Positions 214, 215, and 240 each coordinate Na(+).

This sequence belongs to the bacterial solute-binding protein 7 family. Homodimer. The complex comprises the extracytoplasmic solute receptor protein TakP, and the two transmembrane proteins TakQ and TakM. Post-translationally, predicted to be exported by the Tat system. The position of the signal peptide cleavage has not been experimentally proven.

It localises to the periplasm. Functionally, part of the tripartite ATP-independent periplasmic (TRAP) transport system TakPQM involved in the uptake of alpha-keto acids. This protein specifically binds alpha-keto acids including pyruvate, oxobutyrate, oxovalerate and 4-methyl-2-oxovalerate. Ligand-binding affinity increases with the increasing chain length of the aliphatic backbone of the ligand. Is not able to bind alpha-ketoglutarate. This chain is Alpha-keto acid-binding periplasmic protein TakP, found in Cereibacter sphaeroides (strain ATCC 17023 / DSM 158 / JCM 6121 / CCUG 31486 / LMG 2827 / NBRC 12203 / NCIMB 8253 / ATH 2.4.1.) (Rhodobacter sphaeroides).